Consider the following 501-residue polypeptide: Cystine/glutamate transporter (501 aa).

Over 1–43 (MVRKPVVSTISKGGYLQGNVNGRLPSLGNKEPPGQEKVQLKRK) the chain is Cytoplasmic. The residue at position 26 (serine 26) is a Phosphoserine. The helical transmembrane segment at 44 to 64 (VTLLRGVSIIIGTIIGAGIFI) threads the bilayer. The Extracellular portion of the chain corresponds to 65–74 (SPKGVLQNTG). The helical transmembrane segment at 75–95 (SVGMSLTIWTVCGVLSLFGAL) threads the bilayer. Residues 96 to 101 (SYAELG) lie on the Cytoplasmic side of the membrane. An intramembrane segment occupies 102 to 116 (TTIKKSGGHYTYILE). Residues 117-130 (VFGPLPAFVRVWVE) are Cytoplasmic-facing. Residues 131 to 150 (LLIIRPAATAVISLAFGRYI) traverse the membrane as a helical segment. Arginine 135 provides a ligand contact to L-glutamate. At 151–163 (LEPFFIQCEIPEL) the chain is on the extracellular side. A helical membrane pass occupies residues 164 to 179 (AIKLITAVGITVVMVL). Topologically, residues 180 to 193 (NSMSVSWSARIQIF) are cytoplasmic. The helical transmembrane segment at 194-210 (LTFCKLTAILIIIVPGV) threads the bilayer. The Extracellular segment spans residues 211–234 (MQLIKGQTQNFKDAFSGRDSSITR). The helical transmembrane segment at 235-255 (LPLAFYYGMYAYAGWFYLNFV) threads the bilayer. Tyrosine 244 provides a ligand contact to L-glutamate. Over 256–265 (TEEVENPEKT) the chain is Cytoplasmic. A helical membrane pass occupies residues 266 to 286 (IPLAICISMAIVTIGYVLTNV). Over 287 to 317 (AYFTTINAEELLLSNAVAVTFSERLLGNFSL) the chain is Extracellular. N-linked (GlcNAc...) asparagine glycosylation occurs at asparagine 314. Residues 318–338 (AVPIFVALSCFGSMNGGVFAV) form a helical membrane-spanning segment. Topologically, residues 339 to 364 (SRLFYVASREGHLPEILSMIHVRKHT) are cytoplasmic. A helical transmembrane segment spans residues 365–385 (PLPAVIVLHPLTMIMLFSGDL). Residues 386–387 (DS) are Extracellular-facing. Residues 388 to 408 (LLNFLSFARWLFIGLAVAGLI) form a helical membrane-spanning segment. At 409–422 (YLRYKCPDMHRPFK) the chain is on the cytoplasmic side. A helical transmembrane segment spans residues 423–443 (VPLFIPALFSFTCLFMVALSL). At 444–449 (YSDPFS) the chain is on the extracellular side. Residues 450-470 (TGIGFVITLTGVPAYYLFIIW) traverse the membrane as a helical segment. The Cytoplasmic segment spans residues 471–501 (DKKPRWFRIMSEKITRTLQIILEVVPEEDKL).

Belongs to the amino acid-polyamine-organocation (APC) superfamily. L-type amino acid transporter (LAT) (TC 2.A.3.8) family. In terms of assembly, disulfide-linked heterodimer with the amino acid transport protein SLC3A2/4F2hc; this interaction mediates cell membrane localization. Ubiquitinated by TRIM26; leading to proteasomal degradation. Expressed in term placenta and primary term cytotrophoblast. Expressed mainly in the brain, but also in pancreas.

The protein localises to the cell membrane. The protein resides in the cell projection. It localises to the microvillus membrane. It catalyses the reaction L-cystine(out) + L-glutamate(in) = L-cystine(in) + L-glutamate(out). The enzyme catalyses an L-alpha-amino acid(in) + L-kynurenine(out) = an L-alpha-amino acid(out) + L-kynurenine(in). It carries out the reaction N-acetyl-L-cysteine(out) + L-glutamate(in) = N-acetyl-L-cysteine(in) + L-glutamate(out). Its activity is regulated as follows. Inhibited by erastin and sulfasalazine. Inhibited by (S)-lactate. Inactivated by p-chloromercuribenzoic acid and p-chloromercuribenzenesulfonic acid. Its function is as follows. Heterodimer with SLC3A2, that functions as an antiporter by mediating the exchange of extracellular anionic L-cystine and intracellular L-glutamate across the cellular plasma membrane. Provides L-cystine for the maintenance of the redox balance between extracellular L-cystine and L-cysteine and for the maintenance of the intracellular levels of glutathione that is essential for cells protection from oxidative stress. The transport is sodium-independent, electroneutral with a stoichiometry of 1:1, and is drove by the high intracellular concentration of L-glutamate and the intracellular reduction of L-cystine. In addition, mediates the import of L-kynurenine leading to anti-ferroptotic signaling propagation required to maintain L-cystine and glutathione homeostasis. Moreover, mediates N-acetyl-L-cysteine uptake into the placenta leading to subsequently down-regulation of pathways associated with oxidative stress, inflammation and apoptosis. In vitro can also transport L-aspartate. May participate in astrocyte and meningeal cell proliferation during development and can provide neuroprotection by promoting glutathione synthesis and delivery from non-neuronal cells such as astrocytes and meningeal cells to immature neurons. Controls the production of pheomelanin pigment directly. This chain is Cystine/glutamate transporter, found in Homo sapiens (Human).